The sequence spans 660 residues: Bifunctional polymyxin resistance protein ArnA (660 aa).

Residues 1–304 (MKAVVFAYHN…EMYLVEGMRF (304 aa)) are formyltransferase ArnAFT. His104 serves as the catalytic Proton donor; for formyltransferase activity. (6R)-10-formyltetrahydrofolate is bound by residues Arg114 and 136 to 140 (TVKPD). Positions 316 to 660 (RRQKVLIMGA…FLKTAVEETK (345 aa)) are dehydrogenase ArnADH. NAD(+)-binding positions include Asp349 and 370–371 (DI). UDP-alpha-D-glucuronate is bound by residues Ala395, Tyr400, and 434 to 435 (TS). Glu436 acts as the Proton acceptor; for decarboxylase activity in catalysis. Residues Arg462, Asn494, 528-537 (KLIDGGEQKR), and Tyr615 contribute to the UDP-alpha-D-glucuronate site. Arg621 serves as the catalytic Proton donor; for decarboxylase activity.

The protein in the N-terminal section; belongs to the Fmt family. UDP-L-Ara4N formyltransferase subfamily. This sequence in the C-terminal section; belongs to the NAD(P)-dependent epimerase/dehydratase family. UDP-glucuronic acid decarboxylase subfamily. Homohexamer, formed by a dimer of trimers.

The enzyme catalyses UDP-alpha-D-glucuronate + NAD(+) = UDP-beta-L-threo-pentopyranos-4-ulose + CO2 + NADH. The catalysed reaction is UDP-4-amino-4-deoxy-beta-L-arabinose + (6R)-10-formyltetrahydrofolate = UDP-4-deoxy-4-formamido-beta-L-arabinose + (6S)-5,6,7,8-tetrahydrofolate + H(+). It functions in the pathway nucleotide-sugar biosynthesis; UDP-4-deoxy-4-formamido-beta-L-arabinose biosynthesis; UDP-4-deoxy-4-formamido-beta-L-arabinose from UDP-alpha-D-glucuronate: step 1/3. Its pathway is nucleotide-sugar biosynthesis; UDP-4-deoxy-4-formamido-beta-L-arabinose biosynthesis; UDP-4-deoxy-4-formamido-beta-L-arabinose from UDP-alpha-D-glucuronate: step 3/3. It participates in bacterial outer membrane biogenesis; lipopolysaccharide biosynthesis. Bifunctional enzyme that catalyzes the oxidative decarboxylation of UDP-glucuronic acid (UDP-GlcUA) to UDP-4-keto-arabinose (UDP-Ara4O) and the addition of a formyl group to UDP-4-amino-4-deoxy-L-arabinose (UDP-L-Ara4N) to form UDP-L-4-formamido-arabinose (UDP-L-Ara4FN). The modified arabinose is attached to lipid A and is required for resistance to polymyxin and cationic antimicrobial peptides. This chain is Bifunctional polymyxin resistance protein ArnA, found in Shewanella sediminis (strain HAW-EB3).